A 395-amino-acid chain; its full sequence is Na(+)/H(+) antiporter NhaA 1 (395 aa).

The next 11 membrane-spanning stretches (helical) occupy residues 11 to 31 (FFSS…LAMV), 63 to 83 (MLLW…GLEV), 99 to 119 (VFPV…YLAF), 129 to 149 (GWAI…ALLG), 158 to 178 (IFLM…IALF), 183 to 203 (LSML…ALNL), 223 to 243 (VLKS…MIPL), 258 to 278 (VLHP…NAGV), 282 to 302 (GVTL…GLFI), 332 to 352 (IMAV…IATL), and 364 to 384 (WAKL…YLIL).

This sequence belongs to the NhaA Na(+)/H(+) (TC 2.A.33) antiporter family.

It localises to the cell inner membrane. The catalysed reaction is Na(+)(in) + 2 H(+)(out) = Na(+)(out) + 2 H(+)(in). In terms of biological role, na(+)/H(+) antiporter that extrudes sodium in exchange for external protons. This is Na(+)/H(+) antiporter NhaA 1 from Klebsiella pneumoniae subsp. pneumoniae (strain ATCC 700721 / MGH 78578).